A 223-amino-acid polypeptide reads, in one-letter code: Small ribosomal subunit protein uS3 (223 aa).

Residues 39-107 (VREFLHKKLA…PVQINIEEVR (69 aa)) form the KH type-2 domain.

This sequence belongs to the universal ribosomal protein uS3 family. Part of the 30S ribosomal subunit. Forms a tight complex with proteins S10 and S14.

Functionally, binds the lower part of the 30S subunit head. Binds mRNA in the 70S ribosome, positioning it for translation. This is Small ribosomal subunit protein uS3 from Francisella tularensis subsp. novicida (strain U112).